The chain runs to 307 residues: 4-hydroxy-tetrahydrodipicolinate synthase (307 aa).

Serine 57 lines the pyruvate pocket. The active-site Proton donor/acceptor is tyrosine 145. The active-site Schiff-base intermediate with substrate is the lysine 173. Isoleucine 219 provides a ligand contact to pyruvate.

The protein belongs to the DapA family. As to quaternary structure, homotetramer; dimer of dimers.

Its subcellular location is the cytoplasm. The catalysed reaction is L-aspartate 4-semialdehyde + pyruvate = (2S,4S)-4-hydroxy-2,3,4,5-tetrahydrodipicolinate + H2O + H(+). It functions in the pathway amino-acid biosynthesis; L-lysine biosynthesis via DAP pathway; (S)-tetrahydrodipicolinate from L-aspartate: step 3/4. Its function is as follows. Catalyzes the condensation of (S)-aspartate-beta-semialdehyde [(S)-ASA] and pyruvate to 4-hydroxy-tetrahydrodipicolinate (HTPA). The chain is 4-hydroxy-tetrahydrodipicolinate synthase from Polynucleobacter asymbioticus (strain DSM 18221 / CIP 109841 / QLW-P1DMWA-1) (Polynucleobacter necessarius subsp. asymbioticus).